Here is a 164-residue protein sequence, read N- to C-terminus: MTEMQLLEMLKKEASSVHIKDIMSASVYLREDARYLPPREQKEFIERFTRAFFNRIRDIKNDKNIYQGHVDTAGLKEFIDFLDQQLSQAKTENERCFQKIARIITIYVTFVRKEPVHPVGTRFPGGFTVRREGNVFYCPVKDRQINTPGALCRFCVSIQDHDIS.

This sequence belongs to the UPF0305 family.

This Methanothermobacter thermautotrophicus (strain ATCC 29096 / DSM 1053 / JCM 10044 / NBRC 100330 / Delta H) (Methanobacterium thermoautotrophicum) protein is UPF0305 protein MTH_812.